Here is a 261-residue protein sequence, read N- to C-terminus: tRNA (guanine-N(7)-)-methyltransferase (261 aa).

4 residues coordinate S-adenosyl-L-methionine: Glu75, Glu100, Asp127, and Asp150. The active site involves Asp150. Residue Lys154 participates in substrate binding. The segment at 156-161 (RHNKRR) is interaction with RNA. Residues Asp186 and 223-226 (THFE) contribute to the substrate site.

Belongs to the class I-like SAM-binding methyltransferase superfamily. TrmB family.

It carries out the reaction guanosine(46) in tRNA + S-adenosyl-L-methionine = N(7)-methylguanosine(46) in tRNA + S-adenosyl-L-homocysteine. It functions in the pathway tRNA modification; N(7)-methylguanine-tRNA biosynthesis. Functionally, catalyzes the formation of N(7)-methylguanine at position 46 (m7G46) in tRNA. The chain is tRNA (guanine-N(7)-)-methyltransferase from Xanthomonas campestris pv. campestris (strain 8004).